The chain runs to 288 residues: Fructose-bisphosphate aldolase (288 aa).

Residue Ser49 coordinates D-glyceraldehyde 3-phosphate. Asp84 (proton donor) is an active-site residue. Residues His85, Asp105, Glu135, and His177 each coordinate Zn(2+). Dihydroxyacetone phosphate is bound at residue Gly178. His206 lines the Zn(2+) pocket. Residues 207–209 and 228–231 contribute to the dihydroxyacetone phosphate site; these read GGS and NINT.

This sequence belongs to the class II fructose-bisphosphate aldolase family. In terms of assembly, homodimer. It depends on Zn(2+) as a cofactor.

It catalyses the reaction beta-D-fructose 1,6-bisphosphate = D-glyceraldehyde 3-phosphate + dihydroxyacetone phosphate. It functions in the pathway carbohydrate degradation; glycolysis; D-glyceraldehyde 3-phosphate and glycerone phosphate from D-glucose: step 4/4. In terms of biological role, catalyzes the aldol condensation of dihydroxyacetone phosphate (DHAP or glycerone-phosphate) with glyceraldehyde 3-phosphate (G3P) to form fructose 1,6-bisphosphate (FBP) in gluconeogenesis and the reverse reaction in glycolysis. The polypeptide is Fructose-bisphosphate aldolase (fba) (Mycoplasma genitalium (strain ATCC 33530 / DSM 19775 / NCTC 10195 / G37) (Mycoplasmoides genitalium)).